The following is a 144-amino-acid chain: uncharacterized protein (144 aa).

The region spanning N50–I140 is the Rhodanese domain.

This is an uncharacterized protein from Buchnera aphidicola subsp. Acyrthosiphon pisum (strain APS) (Acyrthosiphon pisum symbiotic bacterium).